We begin with the raw amino-acid sequence, 245 residues long: tRNA (guanine-N(1)-)-methyltransferase (245 aa).

S-adenosyl-L-methionine-binding positions include Gly-113 and 133-138 (IGDYVL).

It belongs to the RNA methyltransferase TrmD family. Homodimer.

The protein resides in the cytoplasm. It carries out the reaction guanosine(37) in tRNA + S-adenosyl-L-methionine = N(1)-methylguanosine(37) in tRNA + S-adenosyl-L-homocysteine + H(+). Its function is as follows. Specifically methylates guanosine-37 in various tRNAs. The sequence is that of tRNA (guanine-N(1)-)-methyltransferase from Actinobacillus succinogenes (strain ATCC 55618 / DSM 22257 / CCUG 43843 / 130Z).